The chain runs to 196 residues: RNA pyrophosphohydrolase (196 aa).

Positions 6-149 (GYRPNVGIVI…KRDVYRKVMK (144 aa)) constitute a Nudix hydrolase domain. The Nudix box motif lies at 38–59 (GGINDNESAEQAMYRELHEEVG).

Belongs to the Nudix hydrolase family. RppH subfamily. A divalent metal cation serves as cofactor.

Its function is as follows. Accelerates the degradation of transcripts by removing pyrophosphate from the 5'-end of triphosphorylated RNA, leading to a more labile monophosphorylated state that can stimulate subsequent ribonuclease cleavage. The polypeptide is RNA pyrophosphohydrolase (Haemophilus influenzae (strain PittEE)).